Reading from the N-terminus, the 332-residue chain is MAVKMIKVHGSGNDFYLLDQTQFQAPLSDADLKQLAINICKRDGAGLYDGADGVLVVDKSEHPQVLGRMRVINADGTEASMCGNGLRTVARYLGTQNSQEDFRVQTMYADLKVQAVADFAAHVPAYSVEISPVTFDAQTLGMHANNDATTIINEKIPALSADLKFSAVAVPNPHLIAFVDHDTLVGPELGRIGEWMNDGKNQIFPDGVNVSFVEVLGPNSIFVRTFERGVGFTNACGTAMSASSLMYVLLHQESTDFNQEIHVTNPGGMVKTVVHQGADEEYWMELIGNATFVRIVTLPLEDALQGDYSPVTATETGEQVAYEDFVANLAKA.

Positions 13 and 73 each coordinate substrate. C82 serves as the catalytic Proton donor. Substrate contacts are provided by residues 83 to 84, N172, N209, and 227 to 228; these read GN and ER. Residue C236 is the Proton acceptor of the active site. Position 237–238 (237–238) interacts with substrate; sequence GT.

Belongs to the diaminopimelate epimerase family. Homodimer.

It is found in the cytoplasm. The enzyme catalyses (2S,6S)-2,6-diaminopimelate = meso-2,6-diaminopimelate. Its pathway is amino-acid biosynthesis; L-lysine biosynthesis via DAP pathway; DL-2,6-diaminopimelate from LL-2,6-diaminopimelate: step 1/1. Functionally, catalyzes the stereoinversion of LL-2,6-diaminopimelate (L,L-DAP) to meso-diaminopimelate (meso-DAP), a precursor of L-lysine and an essential component of the bacterial peptidoglycan. The polypeptide is Diaminopimelate epimerase (Lactiplantibacillus plantarum (strain ATCC BAA-793 / NCIMB 8826 / WCFS1) (Lactobacillus plantarum)).